The following is a 509-amino-acid chain: MAAIGVHLGCTSACVAVYKDGRADVVANDAGDRVTPAIVAYSKNEEVVGLAAKQSRIRNISNTVMKVKQILGRSSDDPQSRKYITESKCLVIEKNGKLLYEIDTGEEKKFVSPEDVARLIFSKMKETAHSVLGSDANDVVITVPFDFGEKQKSALGEAARAAGFNVLRLIHEPSAALLAYGIGQDSPTGKSNILVFKLGGTSLSISVMEVNSGIYRVLSTNTDNNIGGTHFTETLAQYLASEFQRSFRHDVRGNARAMMKLMNGADTAKHSLSTLGSANCFLDSLYEGQDFDCNVSRARFELLCSPLFNKCIEAIREVLEQSGFTADDINKVVLCGGSSRIPRLQQMIRDLFPAVELLNSIPPDEVIPIGAAIEAGILIGKESLSVEDALQIECSAKDILVKGVDESGANSFKVLFPSGTPLPARRQHTLQAPGSISSVCLELYESEGKNSAKVENKFAQVVLQDLDKKENGLRDILAVLTMKRDGSLHVTCTDQETGKCEAITIEVAS.

Belongs to the heat shock protein 70 family. In terms of assembly, component of ribosome-associated complex (RAC), a heterodimer composed of Hsp70/DnaK-type chaperone HSPA14 and Hsp40/DnaJ-type chaperone DNAJC2.

It localises to the cytoplasm. Its subcellular location is the cytosol. Its function is as follows. Component of the ribosome-associated complex (RAC), a complex involved in folding or maintaining nascent polypeptides in a folding-competent state. In the RAC complex, binds to the nascent polypeptide chain, while DNAJC2 stimulates its ATPase activity. This is Heat shock 70 kDa protein 14 (HSPA14) from Bos taurus (Bovine).